The chain runs to 147 residues: Cytochrome c-type biogenesis protein CcmE (147 aa).

At 1–9 the chain is on the cytoplasmic side; sequence MKNLKKQRR. Residues 10 to 30 form a helical; Signal-anchor for type II membrane protein membrane-spanning segment; the sequence is IQVIALATVALVLSTALIGYA. Topologically, residues 31-147 are periplasmic; sequence MRDGINFFRA…EQGVYKGTEG (117 aa). 2 residues coordinate heme: His123 and Tyr127.

This sequence belongs to the CcmE/CycJ family.

It is found in the cell inner membrane. Heme chaperone required for the biogenesis of c-type cytochromes. Transiently binds heme delivered by CcmC and transfers the heme to apo-cytochromes in a process facilitated by CcmF and CcmH. The polypeptide is Cytochrome c-type biogenesis protein CcmE (Roseobacter denitrificans (strain ATCC 33942 / OCh 114) (Erythrobacter sp. (strain OCh 114))).